A 200-amino-acid chain; its full sequence is Recombination protein RecR (200 aa).

The segment at 58 to 73 (CQVCGNMDTENICGIC) adopts a C4-type zinc-finger fold. The region spanning 81-176 (SVIAIVETVA…KISRLASGIP (96 aa)) is the Toprim domain.

The protein belongs to the RecR family.

In terms of biological role, may play a role in DNA repair. It seems to be involved in an RecBC-independent recombinational process of DNA repair. It may act with RecF and RecO. The sequence is that of Recombination protein RecR from Rickettsia bellii (strain OSU 85-389).